A 359-amino-acid chain; its full sequence is Mitochondrial calcium uniporter regulator 1 (359 aa).

Residues 1–68 (MDCGSVGGQR…ARGGVSRASP (68 aa)) lie on the Mitochondrial intermembrane side of the membrane. The helical transmembrane segment at 69–85 (LLLLLLVPSPRLAAAAP) threads the bilayer. The Mitochondrial matrix segment spans residues 86–338 (RRQLGDWERS…LESHKLDNIK (253 aa)). Positions 235-310 (EKSEFSALRA…VALHAQQDRA (76 aa)) form a coiled coil. Residues 339–358 (YLAGSIFTCLTVALGFYRLW) traverse the membrane as a helical segment. Residue I359 is a topological domain, mitochondrial intermembrane.

The protein belongs to the CCDC90 family. As to quaternary structure, interacts (via coiled coil regions) with MCU; the interaction is direct. Interacts with SMDT1/EMRE; the interaction is direct. Interacts with PPIF. As to expression, ubiquitously expressed.

Its subcellular location is the mitochondrion inner membrane. Its function is as follows. Key regulator of mitochondrial calcium uniporter (MCU) required for calcium entry into mitochondrion. Plays a direct role in uniporter-mediated calcium uptake via a direct interaction with MCU. Probably involved in the assembly of the membrane components of the uniporter complex (uniplex). In Homo sapiens (Human), this protein is Mitochondrial calcium uniporter regulator 1.